The sequence spans 163 residues: Secreted RxLR effector protein 135 (163 aa).

The signal sequence occupies residues 1–20 (MRRLYLFVLILATFLTTSHG). The RxLR-dEER motif lies at 33–45 (RGLQEEAGEDEER). A disordered region spans residues 94-127 (KNAGKPKRQTPQIAATGPAKPKVQSPEEAAAVPG).

It belongs to the RxLR effector family.

It is found in the secreted. Its subcellular location is the host nucleus. The protein resides in the host cytoplasm. In terms of biological role, secreted effector that completely suppresses the host cell death induced by cell death-inducing proteins. This Plasmopara viticola (Downy mildew of grapevine) protein is Secreted RxLR effector protein 135.